We begin with the raw amino-acid sequence, 279 residues long: Nitrate import permease protein NrtB (279 aa).

Transmembrane regions (helical) follow at residues 25–45, 91–111, 149–169, 200–220, and 249–269; these read FLPY…ISAI, VAIG…VLGM, AIFV…AVGI, VPYV…AIVA, and IILA…LVAW. In terms of domain architecture, ABC transmembrane type-1 spans 84–267; it reads ILISLQRVAI…LVGLSLDRLV (184 aa).

This sequence belongs to the binding-protein-dependent transport system permease family. CysTW subfamily. As to quaternary structure, the complex is composed of two ATP-binding proteins (NrtC and NrtD), two transmembrane proteins (NrtB) and a solute-binding protein (NrtA).

Its subcellular location is the cell inner membrane. Its function is as follows. Part of the ABC transporter complex NrtABCD involved in nitrate uptake. The complex is probably also involved in nitrite transport. Probably responsible for the translocation of the substrate across the membrane. The protein is Nitrate import permease protein NrtB of Synechococcus elongatus (strain ATCC 33912 / PCC 7942 / FACHB-805) (Anacystis nidulans R2).